A 438-amino-acid polypeptide reads, in one-letter code: Glycosyl hydrolase family 109 protein (438 aa).

Positions 1–33 (MDKTSRRDLLKLASLAGIGAGLARSQGSSKSMA) form a signal peptide, tat-type signal. NAD(+) contacts are provided by residues 52-53 (GR), aspartate 74, 125-128 (WVWH), 145-146 (EV), and asparagine 174. Substrate contacts are provided by residues tyrosine 203, arginine 221, 233-236 (YPTH), and tyrosine 315. Tyrosine 233 provides a ligand contact to NAD(+). The segment at 408-438 (GPLSEASVANGSAPQKFPDFTRGKWQTRQPV) is disordered.

This sequence belongs to the Gfo/Idh/MocA family. Glycosyl hydrolase 109 subfamily. Requires NAD(+) as cofactor. In terms of processing, predicted to be exported by the Tat system. The position of the signal peptide cleavage has not been experimentally proven.

Its function is as follows. Glycosidase. This chain is Glycosyl hydrolase family 109 protein, found in Solibacter usitatus (strain Ellin6076).